A 191-amino-acid chain; its full sequence is Holliday junction branch migration complex subunit RuvA (191 aa).

Residues 1–64 form a domain I region; sequence MIRGVRGTLV…EDELALYGFA (64 aa). The domain II stretch occupies residues 65-136; it reads TEAELELFLS…ELRGRLPALT (72 aa). Positions 136–139 are flexible linker; the sequence is TEVQ. Residues 140–191 are domain III; the sequence is AGEPIDQELVAALQALGYTAQEARQAATHPEVRRAPSLEERIVAALRQLAPP.

This sequence belongs to the RuvA family. Homotetramer. Forms an RuvA(8)-RuvB(12)-Holliday junction (HJ) complex. HJ DNA is sandwiched between 2 RuvA tetramers; dsDNA enters through RuvA and exits via RuvB. An RuvB hexamer assembles on each DNA strand where it exits the tetramer. Each RuvB hexamer is contacted by two RuvA subunits (via domain III) on 2 adjacent RuvB subunits; this complex drives branch migration. In the full resolvosome a probable DNA-RuvA(4)-RuvB(12)-RuvC(2) complex forms which resolves the HJ.

It localises to the cytoplasm. The RuvA-RuvB-RuvC complex processes Holliday junction (HJ) DNA during genetic recombination and DNA repair, while the RuvA-RuvB complex plays an important role in the rescue of blocked DNA replication forks via replication fork reversal (RFR). RuvA specifically binds to HJ cruciform DNA, conferring on it an open structure. The RuvB hexamer acts as an ATP-dependent pump, pulling dsDNA into and through the RuvAB complex. HJ branch migration allows RuvC to scan DNA until it finds its consensus sequence, where it cleaves and resolves the cruciform DNA. The sequence is that of Holliday junction branch migration complex subunit RuvA from Thermomicrobium roseum (strain ATCC 27502 / DSM 5159 / P-2).